A 588-amino-acid polypeptide reads, in one-letter code: Adenine deaminase (588 aa).

The protein belongs to the metallo-dependent hydrolases superfamily. Adenine deaminase family. In terms of assembly, homodimer. Mn(2+) serves as cofactor.

The enzyme catalyses adenine + H2O + H(+) = hypoxanthine + NH4(+). The chain is Adenine deaminase from Escherichia coli O7:K1 (strain IAI39 / ExPEC).